The primary structure comprises 505 residues: Catalase (505 aa).

Active-site residues include His-58 and Asn-131. Tyr-341 contacts heme.

This sequence belongs to the catalase family. The cofactor is heme.

The catalysed reaction is 2 H2O2 = O2 + 2 H2O. In terms of biological role, decomposes hydrogen peroxide into water and oxygen; serves to protect cells from the toxic effects of hydrogen peroxide. This chain is Catalase (kat), found in Methanosarcina barkeri (strain Fusaro / DSM 804).